A 754-amino-acid polypeptide reads, in one-letter code: 5-methyltetrahydropteroyltriglutamate--homocysteine methyltransferase (754 aa).

Residues 15–18 (RELK) and Lys114 contribute to the 5-methyltetrahydropteroyltri-L-glutamate site. Residues 430–432 (IGS) and Glu483 each bind L-homocysteine. L-methionine contacts are provided by residues 430-432 (IGS) and Glu483. 5-methyltetrahydropteroyltri-L-glutamate contacts are provided by residues 514–515 (RC) and Trp560. L-homocysteine is bound at residue Asp598. Residue Asp598 participates in L-methionine binding. Position 604 (Glu604) interacts with 5-methyltetrahydropteroyltri-L-glutamate. Zn(2+)-binding residues include His641, Cys643, and Glu665. Residue His694 is the Proton donor of the active site. Zn(2+) is bound at residue Cys726.

This sequence belongs to the vitamin-B12 independent methionine synthase family. It depends on Zn(2+) as a cofactor.

It carries out the reaction 5-methyltetrahydropteroyltri-L-glutamate + L-homocysteine = tetrahydropteroyltri-L-glutamate + L-methionine. The protein operates within amino-acid biosynthesis; L-methionine biosynthesis via de novo pathway; L-methionine from L-homocysteine (MetE route): step 1/1. Its function is as follows. Catalyzes the transfer of a methyl group from 5-methyltetrahydrofolate to homocysteine resulting in methionine formation. The polypeptide is 5-methyltetrahydropteroyltriglutamate--homocysteine methyltransferase (Campylobacter jejuni subsp. jejuni serotype O:6 (strain 81116 / NCTC 11828)).